A 163-amino-acid polypeptide reads, in one-letter code: Phosphopantetheine adenylyltransferase (163 aa).

Residue Thr-11 coordinates substrate. Residues 11-12 (TF) and His-19 each bind ATP. Substrate contacts are provided by Lys-43, Leu-75, and Arg-89. ATP is bound by residues 90–92 (GLR), Glu-100, and 125–131 (YSFISST).

The protein belongs to the bacterial CoaD family. In terms of assembly, homohexamer. The cofactor is Mg(2+).

The protein localises to the cytoplasm. It carries out the reaction (R)-4'-phosphopantetheine + ATP + H(+) = 3'-dephospho-CoA + diphosphate. Its pathway is cofactor biosynthesis; coenzyme A biosynthesis; CoA from (R)-pantothenate: step 4/5. In terms of biological role, reversibly transfers an adenylyl group from ATP to 4'-phosphopantetheine, yielding dephospho-CoA (dPCoA) and pyrophosphate. The chain is Phosphopantetheine adenylyltransferase from Acinetobacter baumannii (strain SDF).